Here is a 171-residue protein sequence, read N- to C-terminus: Co-chaperone protein HscB homolog (171 aa).

The J domain maps to N2 to E74.

Belongs to the HscB family. Interacts with HscA and stimulates its ATPase activity.

In terms of biological role, co-chaperone involved in the maturation of iron-sulfur cluster-containing proteins. Seems to help targeting proteins to be folded toward HscA. This Photobacterium profundum (strain SS9) protein is Co-chaperone protein HscB homolog.